Here is a 328-residue protein sequence, read N- to C-terminus: UDP-glucose 4-epimerase (328 aa).

T119 is a binding site for substrate. The Proton acceptor role is filled by Y143.

It belongs to the NAD(P)-dependent epimerase/dehydratase family. Requires NAD(+) as cofactor.

The enzyme catalyses UDP-alpha-D-glucose = UDP-alpha-D-galactose. It participates in carbohydrate metabolism; galactose metabolism. It functions in the pathway glycan metabolism; exopolysaccharide biosynthesis. This chain is UDP-glucose 4-epimerase (exoB), found in Rhizobium meliloti (strain 1021) (Ensifer meliloti).